Reading from the N-terminus, the 480-residue chain is UDP-glucose 6-dehydrogenase 3 (480 aa).

NAD(+)-binding positions include glycine 8 to glycine 13, aspartate 33, arginine 38, valine 86 to threonine 90, serine 127 to threonine 128, and glutamate 161. Residues glutamate 157 to glutamate 161, lysine 216 to leucine 223, and arginine 256 to glycine 269 contribute to the substrate site. Catalysis depends on cysteine 272, which acts as the Nucleophile. Cysteine 272–lysine 275 lines the NAD(+) pocket. Phenylalanine 334 to lysine 335 provides a ligand contact to substrate. Arginine 342 lines the NAD(+) pocket. Arginine 447 is a substrate binding site.

This sequence belongs to the UDP-glucose/GDP-mannose dehydrogenase family.

The enzyme catalyses UDP-alpha-D-glucose + 2 NAD(+) + H2O = UDP-alpha-D-glucuronate + 2 NADH + 3 H(+). Its pathway is nucleotide-sugar biosynthesis; UDP-alpha-D-glucuronate biosynthesis; UDP-alpha-D-glucuronate from UDP-alpha-D-glucose: step 1/1. Inhibited by UDP-xylose. Its function is as follows. Involved in the biosynthesis of UDP-glucuronic acid (UDP-GlcA), providing nucleotide sugars for cell-wall polymers. Required for the formation of cell wall ingrowths on the outer cell walls of nematode-induced syncytia. In Arabidopsis thaliana (Mouse-ear cress), this protein is UDP-glucose 6-dehydrogenase 3 (UGD3).